A 179-amino-acid chain; its full sequence is Large ribosomal subunit protein uL6 (179 aa).

It belongs to the universal ribosomal protein uL6 family. As to quaternary structure, part of the 50S ribosomal subunit.

This protein binds to the 23S rRNA, and is important in its secondary structure. It is located near the subunit interface in the base of the L7/L12 stalk, and near the tRNA binding site of the peptidyltransferase center. The chain is Large ribosomal subunit protein uL6 from Fructilactobacillus sanfranciscensis (Lactobacillus sanfranciscensis).